Here is a 234-residue protein sequence, read N- to C-terminus: Zinc transport system ATP-binding protein AdcC (234 aa).

The ABC transporter domain occupies Ile4–Ala234. Position 36-43 (Gly36–Thr43) interacts with ATP.

Belongs to the ABC transporter superfamily.

Functionally, part of the ATP-driven transport system AdcABC for zinc. Required for transformability. The polypeptide is Zinc transport system ATP-binding protein AdcC (adcC) (Streptococcus pneumoniae (strain ATCC BAA-255 / R6)).